The sequence spans 315 residues: Prephenate dehydratase (315 aa).

The Prephenate dehydratase domain maps to 3–190; it reads RIAYLGPQGT…ARTRFVLVGR (188 aa). The 78-residue stretch at 204–281 folds into the ACT domain; the sequence is SVALRLPNTP…EDVRYLGSWP (78 aa).

As to quaternary structure, homodimer.

It carries out the reaction prephenate + H(+) = 3-phenylpyruvate + CO2 + H2O. It functions in the pathway amino-acid biosynthesis; L-phenylalanine biosynthesis; phenylpyruvate from prephenate: step 1/1. In Mycobacterium sp. (strain KMS), this protein is Prephenate dehydratase (pheA).